Reading from the N-terminus, the 268-residue chain is Riboflavin transport system permease protein RibX (268 aa).

Helical transmembrane passes span 24–44 (ALGL…GVTL), 76–96 (LATL…ALIL), 119–139 (AIPV…GLTS), 140–160 (KVLV…VVAI), 185–205 (VEAP…LALA), and 236–256 (LIFV…VLAG). Residues 75-255 (TLATLSAALG…LITLTLYVLA (181 aa)) form the ABC transmembrane type-1 domain.

This sequence belongs to the binding-protein-dependent transport system permease family. In terms of assembly, the complex is likely composed of an ATP-binding protein, a transmembrane protein (RibX) and a solute-binding protein (RibY).

The protein resides in the cell membrane. Part of an ABC transporter complex that transports riboflavin into the cell. The protein is Riboflavin transport system permease protein RibX of Chloroflexus aurantiacus (strain ATCC 29366 / DSM 635 / J-10-fl).